A 33-amino-acid polypeptide reads, in one-letter code: Cytochrome b6-f complex subunit 5 (33 aa).

A helical transmembrane segment spans residues 5-25; the sequence is LLFGIILGLISCVLAGLFVSA.

This sequence belongs to the PetG family. The 4 large subunits of the cytochrome b6-f complex are cytochrome b6, subunit IV (17 kDa polypeptide, PetD), cytochrome f and the Rieske protein, while the 4 small subunits are PetG, PetL, PetM and PetN. The complex functions as a dimer.

The protein localises to the plastid. Its subcellular location is the chloroplast thylakoid membrane. Its function is as follows. Component of the cytochrome b6-f complex, which mediates electron transfer between photosystem II (PSII) and photosystem I (PSI), cyclic electron flow around PSI, and state transitions. PetG is required for either the stability or assembly of the cytochrome b6-f complex. This is Cytochrome b6-f complex subunit 5 from Bigelowiella natans (Pedinomonas minutissima).